The sequence spans 122 residues: UPF0102 protein BARBAKC583_1042 (122 aa).

It belongs to the UPF0102 family.

This chain is UPF0102 protein BARBAKC583_1042, found in Bartonella bacilliformis (strain ATCC 35685 / KC583 / Herrer 020/F12,63).